We begin with the raw amino-acid sequence, 76 residues long: Putative Fe(2+) transport protein A (76 aa).

Belongs to the FeoA family.

Functionally, might be involved in Fe(2+) ion uptake. In Helicobacter pylori (strain ATCC 700392 / 26695) (Campylobacter pylori), this protein is Putative Fe(2+) transport protein A.